We begin with the raw amino-acid sequence, 604 residues long: Ectonucleoside triphosphate diphosphohydrolase 7 (604 aa).

At 1-28 (MARISFSYLCPASWYFTVPTVSPFLRQR) the chain is on the cytoplasmic side. The chain crosses the membrane as a helical span at residues 29–49 (VAFLGLFFISCLLLLMLIIDF). The Vesicular portion of the chain corresponds to 50–546 (RHWSASLPRD…QAHGSWFRLS (497 aa)). Catalysis depends on glutamate 217, which acts as the Proton acceptor. N-linked (GlcNAc...) asparagine glycosylation occurs at asparagine 330. The cysteines at positions 448 and 477 are disulfide-linked. Residues 547–567 (FVYNHYLFFACILVVLLAIVL) form a helical membrane-spanning segment. Topologically, residues 568–604 (YLLRLRRIHHRQTRASAPLDLLWLEEVVPMMGVQVGP) are cytoplasmic.

The protein belongs to the GDA1/CD39 NTPase family. It depends on Ca(2+) as a cofactor. Mg(2+) is required as a cofactor.

The protein resides in the cytoplasmic vesicle membrane. The catalysed reaction is a ribonucleoside 5'-triphosphate + H2O = a ribonucleoside 5'-diphosphate + phosphate + H(+). It catalyses the reaction UTP + H2O = UDP + phosphate + H(+). The enzyme catalyses GTP + H2O = GDP + phosphate + H(+). It carries out the reaction CTP + H2O = CDP + phosphate + H(+). In terms of biological role, catalyzes the hydrolysis of nucleoside triphosphates and diphosphates in a calcium- or magnesium-dependent manner. Preferentially hydrolyzes nucleoside 5'-triphosphates, with substrate preference for UTP &gt; GTP &gt; CTP. Hydrolyzes ATP and nucleoside diphosphates only to a minor extent. In Pongo abelii (Sumatran orangutan), this protein is Ectonucleoside triphosphate diphosphohydrolase 7 (ENTPD7).